Reading from the N-terminus, the 131-residue chain is Large ribosomal subunit protein bL12 (131 aa).

Belongs to the bacterial ribosomal protein bL12 family. Homodimer. Part of the ribosomal stalk of the 50S ribosomal subunit. Forms a multimeric L10(L12)X complex, where L10 forms an elongated spine to which 2 to 4 L12 dimers bind in a sequential fashion. Binds GTP-bound translation factors.

Functionally, forms part of the ribosomal stalk which helps the ribosome interact with GTP-bound translation factors. Is thus essential for accurate translation. The protein is Large ribosomal subunit protein bL12 of Prochlorococcus marinus (strain MIT 9313).